Here is a 103-residue protein sequence, read N- to C-terminus: Putative double-stranded DNA mimic protein APJL_1366 (103 aa).

Belongs to the putative dsDNA mimic protein family.

Functionally, may act as a double-stranded DNA (dsDNA) mimic. Probably regulates the activity of a dsDNA-binding protein. This is Putative double-stranded DNA mimic protein APJL_1366 from Actinobacillus pleuropneumoniae serotype 3 (strain JL03).